An 895-amino-acid chain; its full sequence is Serine/threonine-protein kinase-like protein ACR4 (895 aa).

Positions 1-29 are cleaved as a signal peptide; the sequence is MRMFETRAREWILLVKLVLFTSIWQLASA. The Extracellular portion of the chain corresponds to 30-434; it reads LGSMSSIAIS…FWSLQLPIAT (405 aa). 7 tandem repeats follow at residues 38–73, 77–112, 130–167, 169–202, 210–245, 262–296, and 301–339. The interval 38–339 is 7 X 36 AA repeats; the sequence is ISYGEGGSVF…PASIPLAVSP (302 aa). 2 N-linked (GlcNAc...) asparagine glycosylation sites follow: asparagine 158 and asparagine 196. A glycan (N-linked (GlcNAc...) asparagine) is linked at asparagine 290. The stretch at 346-395 is one TNFR-Cys repeat; that stretch reads PCPPGTHELSNQENSPCKFTGSHICLPCSTSCPPGMYQKSVCTERSDQVC. 3 disulfides stabilise this stretch: cysteine 347-cysteine 370, cysteine 373-cysteine 387, and cysteine 377-cysteine 395. N-linked (GlcNAc...) asparagine glycans are attached at residues asparagine 398 and asparagine 410. Residues 435 to 455 form a helical membrane-spanning segment; it reads AEIGFALFLVAVVSITAALYI. At 456–895 the chain is on the cytoplasmic side; it reads RYRLRNCRCS…GQSLFLHHNF (440 aa). Serine 475 is modified (phosphoserine). The Protein kinase domain maps to 512 to 789; the sequence is FKEESIVGKG…KVTTALERAL (278 aa). ATP contacts are provided by residues 518 to 526 and lysine 540; that span reads VGKGSFSCV. Aspartate 641 acts as the Proton acceptor in catalysis. The disordered stretch occupies residues 818–895; that stretch reads SWRIGSKRSG…GQSLFLHHNF (78 aa). Residues 865–877 show a composition bias toward basic and acidic residues; sequence EGRKQQEALRSLE.

Belongs to the protein kinase superfamily. Ser/Thr protein kinase family. In terms of assembly, homodimer. Interacts with PP2A3. Post-translationally, autophosphorylated and phosphorylated by ALE2. Expressed in seedlings, floral buds, siliques, leaves, shoot apical meristems (SAM), and, to a lower extent, in roots.

Its subcellular location is the cell membrane. The protein localises to the endosome. It localises to the multivesicular body membrane. It carries out the reaction L-seryl-[protein] + ATP = O-phospho-L-seryl-[protein] + ADP + H(+). The catalysed reaction is L-threonyl-[protein] + ATP = O-phospho-L-threonyl-[protein] + ADP + H(+). Controls formative cell division in meristems, including root tips and lateral root initiation zones of the pericycle, in response to CLE40 signal. Acts with CLE40p peptide as a ligand-receptor pair in a signal transduction pathway, coordinating movement of the root tip and organization of cell divisions in the root meristem. Required during embryogenesis and development, probably for the differentiation of protoderm and epidermal cells. Involved in the regulation of cellular organization during the development of sepal margins and ovule integument outgrowth and promotes giant cell formation. Can phosphorylate ALE2. The polypeptide is Serine/threonine-protein kinase-like protein ACR4 (Arabidopsis thaliana (Mouse-ear cress)).